The primary structure comprises 209 residues: Shikimate kinase (209 aa).

47–52 (GAGKTT) lines the ATP pocket. T51 contacts Mg(2+). Substrate-binding residues include D69, R93, and G115. Residue R153 participates in ATP binding. R172 lines the substrate pocket.

Belongs to the shikimate kinase family. In terms of assembly, monomer. The cofactor is Mg(2+).

It localises to the cytoplasm. It catalyses the reaction shikimate + ATP = 3-phosphoshikimate + ADP + H(+). It functions in the pathway metabolic intermediate biosynthesis; chorismate biosynthesis; chorismate from D-erythrose 4-phosphate and phosphoenolpyruvate: step 5/7. Catalyzes the specific phosphorylation of the 3-hydroxyl group of shikimic acid using ATP as a cosubstrate. The sequence is that of Shikimate kinase from Bordetella avium (strain 197N).